A 418-amino-acid polypeptide reads, in one-letter code: Light-independent protochlorophyllide reductase subunit N (418 aa).

The [4Fe-4S] cluster site is built by cysteine 17, cysteine 42, and cysteine 103.

The protein belongs to the BchN/ChlN family. Protochlorophyllide reductase is composed of three subunits; ChlL, ChlN and ChlB. Forms a heterotetramer of two ChlB and two ChlN subunits. The cofactor is [4Fe-4S] cluster.

It catalyses the reaction chlorophyllide a + oxidized 2[4Fe-4S]-[ferredoxin] + 2 ADP + 2 phosphate = protochlorophyllide a + reduced 2[4Fe-4S]-[ferredoxin] + 2 ATP + 2 H2O. The protein operates within porphyrin-containing compound metabolism; chlorophyll biosynthesis (light-independent). Component of the dark-operative protochlorophyllide reductase (DPOR) that uses Mg-ATP and reduced ferredoxin to reduce ring D of protochlorophyllide (Pchlide) to form chlorophyllide a (Chlide). This reaction is light-independent. The NB-protein (ChlN-ChlB) is the catalytic component of the complex. This Prochlorococcus marinus (strain MIT 9312) protein is Light-independent protochlorophyllide reductase subunit N.